Reading from the N-terminus, the 334-residue chain is Beta-hexosaminidase (334 aa).

Substrate-binding positions include D60, R68, R133, and 163–164; that span reads KH. H176 acts as the Proton donor/acceptor in catalysis. The active-site Nucleophile is D247.

This sequence belongs to the glycosyl hydrolase 3 family. NagZ subfamily.

It is found in the cytoplasm. The enzyme catalyses Hydrolysis of terminal non-reducing N-acetyl-D-hexosamine residues in N-acetyl-beta-D-hexosaminides.. Its pathway is cell wall biogenesis; peptidoglycan recycling. Plays a role in peptidoglycan recycling by cleaving the terminal beta-1,4-linked N-acetylglucosamine (GlcNAc) from peptide-linked peptidoglycan fragments, giving rise to free GlcNAc, anhydro-N-acetylmuramic acid and anhydro-N-acetylmuramic acid-linked peptides. This chain is Beta-hexosaminidase, found in Xanthomonas oryzae pv. oryzae (strain KACC10331 / KXO85).